We begin with the raw amino-acid sequence, 274 residues long: tRNA-cytidine(32) 2-sulfurtransferase (274 aa).

The PP-loop motif motif lies at 40 to 45 (SGGKDS). Positions 115, 118, and 206 each coordinate [4Fe-4S] cluster.

The protein belongs to the TtcA family. In terms of assembly, homodimer. Mg(2+) is required as a cofactor. [4Fe-4S] cluster serves as cofactor.

Its subcellular location is the cytoplasm. It catalyses the reaction cytidine(32) in tRNA + S-sulfanyl-L-cysteinyl-[cysteine desulfurase] + AH2 + ATP = 2-thiocytidine(32) in tRNA + L-cysteinyl-[cysteine desulfurase] + A + AMP + diphosphate + H(+). It participates in tRNA modification. Functionally, catalyzes the ATP-dependent 2-thiolation of cytidine in position 32 of tRNA, to form 2-thiocytidine (s(2)C32). The sulfur atoms are provided by the cysteine/cysteine desulfurase (IscS) system. This Pseudomonas fluorescens (strain ATCC BAA-477 / NRRL B-23932 / Pf-5) protein is tRNA-cytidine(32) 2-sulfurtransferase.